The chain runs to 473 residues: Photosystem II CP43 reaction center protein (473 aa).

Positions methionine 1 to glutamate 14 are excised as a propeptide. An N-acetylthreonine modification is found at threonine 15. Threonine 15 is modified (phosphothreonine). Transmembrane regions (helical) follow at residues leucine 69–alanine 93, leucine 134–asparagine 155, lysine 178–threonine 200, lysine 255–serine 275, and tryptophan 291–alanine 312. Residue glutamate 367 participates in [CaMn4O5] cluster binding. Residues arginine 447–proline 471 form a helical membrane-spanning segment.

It belongs to the PsbB/PsbC family. PsbC subfamily. In terms of assembly, PSII is composed of 1 copy each of membrane proteins PsbA, PsbB, PsbC, PsbD, PsbE, PsbF, PsbH, PsbI, PsbJ, PsbK, PsbL, PsbM, PsbT, PsbX, PsbY, PsbZ, Psb30/Ycf12, at least 3 peripheral proteins of the oxygen-evolving complex and a large number of cofactors. It forms dimeric complexes. Binds multiple chlorophylls and provides some of the ligands for the Ca-4Mn-5O cluster of the oxygen-evolving complex. It may also provide a ligand for a Cl- that is required for oxygen evolution. PSII binds additional chlorophylls, carotenoids and specific lipids. is required as a cofactor.

It localises to the plastid. It is found in the chloroplast thylakoid membrane. Its function is as follows. One of the components of the core complex of photosystem II (PSII). It binds chlorophyll and helps catalyze the primary light-induced photochemical processes of PSII. PSII is a light-driven water:plastoquinone oxidoreductase, using light energy to abstract electrons from H(2)O, generating O(2) and a proton gradient subsequently used for ATP formation. The chain is Photosystem II CP43 reaction center protein from Solanum tuberosum (Potato).